Here is a 107-residue protein sequence, read N- to C-terminus: Large ribosomal subunit protein uL24 (107 aa).

Belongs to the universal ribosomal protein uL24 family. As to quaternary structure, part of the 50S ribosomal subunit.

Its function is as follows. One of two assembly initiator proteins, it binds directly to the 5'-end of the 23S rRNA, where it nucleates assembly of the 50S subunit. Functionally, one of the proteins that surrounds the polypeptide exit tunnel on the outside of the subunit. This is Large ribosomal subunit protein uL24 from Solidesulfovibrio magneticus (strain ATCC 700980 / DSM 13731 / RS-1) (Desulfovibrio magneticus).